The sequence spans 111 residues: uncharacterized protein (111 aa).

This is an uncharacterized protein from Acanthamoeba polyphaga mimivirus (APMV).